The chain runs to 149 residues: MKSVDLKILDARMRDYLPTYATPGSAGLDLRACIDKAITLEPGATTLVPTGLAIHVADPGYAAIILPRSGLGHKHGIVLGNLVGLIDSDYQGQLMVSTWNRGQTAFTLEPMERLAQLVIVPVQQVSFNVVDEFGASERGAGGFGSTGRS.

Residues 68–70 (RSG), Asn81, 85–87 (LID), and Met95 contribute to the substrate site.

The protein belongs to the dUTPase family. The cofactor is Mg(2+).

It carries out the reaction dUTP + H2O = dUMP + diphosphate + H(+). It participates in pyrimidine metabolism; dUMP biosynthesis; dUMP from dCTP (dUTP route): step 2/2. This enzyme is involved in nucleotide metabolism: it produces dUMP, the immediate precursor of thymidine nucleotides and it decreases the intracellular concentration of dUTP so that uracil cannot be incorporated into DNA. This is Deoxyuridine 5'-triphosphate nucleotidohydrolase from Bordetella avium (strain 197N).